Here is a 210-residue protein sequence, read N- to C-terminus: Late histone H1 (210 aa).

Disordered regions lie at residues 1–21 and 86–210; these read MSAAKPKTAKKARAAPAHPPT and SFKL…AAKK. Positions 17 to 91 constitute an H15 domain; the sequence is AHPPTSQMVV…GASGSFKLGK (75 aa). A compositionally biased stretch (basic residues) spans 104 to 113; that stretch reads AAAKKAKLAA. A compositionally biased stretch (basic and acidic residues) spans 114-123; sequence KKKEQKEKKA. A compositionally biased stretch (basic residues) spans 124-210; the sequence is AKTKARKEKL…KPAAKKAAKK (87 aa).

It belongs to the histone H1/H5 family.

Its subcellular location is the nucleus. It is found in the chromosome. Histones H1 are necessary for the condensation of nucleosome chains into higher-order structures. This Lytechinus pictus (Painted sea urchin) protein is Late histone H1.